Consider the following 163-residue polypeptide: Small ribosomal subunit protein eS10A (163 aa).

Residues 92-163 (LTQTTRSNAV…GFGRASRYDN (72 aa)) form a disordered region. Over residues 105 to 116 (GGPGGPGGGFGG) the composition is skewed to gly residues.

It belongs to the eukaryotic ribosomal protein eS10 family.

It localises to the cytoplasm. The protein is Small ribosomal subunit protein eS10A (RpS10a) of Drosophila melanogaster (Fruit fly).